Here is a 152-residue protein sequence, read N- to C-terminus: Lipoprotein signal peptidase (152 aa).

A run of 2 helical transmembrane segments spans residues 55-75 (NGRW…LYYL) and 87-107 (VALG…IATG). Active-site residues include D111 and D129. A helical transmembrane segment spans residues 125-145 (FNVADICVTVGVGLLFLHLVL).

This sequence belongs to the peptidase A8 family.

It localises to the cell membrane. The enzyme catalyses Release of signal peptides from bacterial membrane prolipoproteins. Hydrolyzes -Xaa-Yaa-Zaa-|-(S,diacylglyceryl)Cys-, in which Xaa is hydrophobic (preferably Leu), and Yaa (Ala or Ser) and Zaa (Gly or Ala) have small, neutral side chains.. It participates in protein modification; lipoprotein biosynthesis (signal peptide cleavage). This protein specifically catalyzes the removal of signal peptides from prolipoproteins. The sequence is that of Lipoprotein signal peptidase from Symbiobacterium thermophilum (strain DSM 24528 / JCM 14929 / IAM 14863 / T).